Here is a 743-residue protein sequence, read N- to C-terminus: Phosphoribosylformylglycinamidine synthase subunit PurL (743 aa).

Residue H53 is part of the active site. ATP is bound by residues Y56 and K95. E97 provides a ligand contact to Mg(2+). Residues 98–101 (SHNH) and R120 contribute to the substrate site. The active-site Proton acceptor is H99. D121 contacts Mg(2+). Q245 contacts substrate. Residue D275 participates in Mg(2+) binding. Substrate is bound at residue 319 to 321 (ESQ). ATP-binding residues include D502 and G539. N540 serves as a coordination point for Mg(2+). A substrate-binding site is contributed by S542.

This sequence belongs to the FGAMS family. As to quaternary structure, monomer. Part of the FGAM synthase complex composed of 1 PurL, 1 PurQ and 2 PurS subunits.

The protein resides in the cytoplasm. It catalyses the reaction N(2)-formyl-N(1)-(5-phospho-beta-D-ribosyl)glycinamide + L-glutamine + ATP + H2O = 2-formamido-N(1)-(5-O-phospho-beta-D-ribosyl)acetamidine + L-glutamate + ADP + phosphate + H(+). It functions in the pathway purine metabolism; IMP biosynthesis via de novo pathway; 5-amino-1-(5-phospho-D-ribosyl)imidazole from N(2)-formyl-N(1)-(5-phospho-D-ribosyl)glycinamide: step 1/2. Part of the phosphoribosylformylglycinamidine synthase complex involved in the purines biosynthetic pathway. Catalyzes the ATP-dependent conversion of formylglycinamide ribonucleotide (FGAR) and glutamine to yield formylglycinamidine ribonucleotide (FGAM) and glutamate. The FGAM synthase complex is composed of three subunits. PurQ produces an ammonia molecule by converting glutamine to glutamate. PurL transfers the ammonia molecule to FGAR to form FGAM in an ATP-dependent manner. PurS interacts with PurQ and PurL and is thought to assist in the transfer of the ammonia molecule from PurQ to PurL. In Lactobacillus helveticus (strain DPC 4571), this protein is Phosphoribosylformylglycinamidine synthase subunit PurL.